Here is a 136-residue protein sequence, read N- to C-terminus: Ribosome-binding factor A (136 aa).

It belongs to the RbfA family. As to quaternary structure, monomer. Binds 30S ribosomal subunits, but not 50S ribosomal subunits or 70S ribosomes.

The protein resides in the cytoplasm. One of several proteins that assist in the late maturation steps of the functional core of the 30S ribosomal subunit. Associates with free 30S ribosomal subunits (but not with 30S subunits that are part of 70S ribosomes or polysomes). Required for efficient processing of 16S rRNA. May interact with the 5'-terminal helix region of 16S rRNA. In Rhizobium etli (strain ATCC 51251 / DSM 11541 / JCM 21823 / NBRC 15573 / CFN 42), this protein is Ribosome-binding factor A.